We begin with the raw amino-acid sequence, 251 residues long: Protein unc-119 homolog B (251 aa).

Residues 1–13 show a composition bias toward polar residues; the sequence is MSGSNPKAATAGS. The tract at residues 1–56 is disordered; the sequence is MSGSNPKAATAGSQAGPGGLVAGKEEKKKAGGGVLNRLKARRQGPPHTPDDGSGAA. Position 2 is an N-acetylserine (serine 2). Lysine 24 bears the N6-acetyllysine mark. Residue tyrosine 142 coordinates tetradecanoate.

It belongs to the PDE6D/unc-119 family. Found in a complex with ARL3, RP2 and UNC119B; RP2 induces hydrolysis of GTP ARL3 in the complex, leading to the release of UNC119B. Interacts with NPHP3 (when myristoylated). Interacts with CYS1 (when myristoylated). Interacts with MACIR; interaction only takes place when UNC119B is not liganded with myristoylated proteins.

The protein resides in the cell projection. The protein localises to the cilium. Functionally, myristoyl-binding protein that acts as a cargo adapter: specifically binds the myristoyl moiety of a subset of N-terminally myristoylated proteins and is required for their localization. Binds myristoylated NPHP3 and plays a key role in localization of NPHP3 to the primary cilium membrane. Does not bind all myristoylated proteins. Probably plays a role in trafficking proteins in photoreceptor cells. The polypeptide is Protein unc-119 homolog B (Unc119b) (Mus musculus (Mouse)).